A 290-amino-acid polypeptide reads, in one-letter code: MDKIIKTISESGAFRAFVLDSTETVRTAQEKHQTQASSTVALGRTLIASQILAANEKGNTKLTVKVLGSSSLGAIITVADTKGNVKGYVQNPGVDIKKTATGEVLVGPFVGNGQFLVITDYGAGNPYNSITPLISGEIGEDLAFYLTESQQTPSAVGLNVLLDEEDKVKVAGGFLVQVLPGAKKEEIARFEKRIQEMPAISTLLESDDHIEALLKAIYGDEAYKRLSEEEIRFQCDCSHERFMNALASLPSSDLQEMKEEDHGVEITCQFCQTTYNFDEKDLEELIRDKS.

Disulfide bonds link C235–C237 and C268–C271.

It belongs to the HSP33 family. Under oxidizing conditions two disulfide bonds are formed involving the reactive cysteines. Under reducing conditions zinc is bound to the reactive cysteines and the protein is inactive.

It is found in the cytoplasm. Redox regulated molecular chaperone. Protects both thermally unfolding and oxidatively damaged proteins from irreversible aggregation. Plays an important role in the bacterial defense system toward oxidative stress. The sequence is that of 33 kDa chaperonin from Streptococcus pneumoniae (strain JJA).